A 386-amino-acid polypeptide reads, in one-letter code: O-methyltransferase aunE (386 aa).

Tryptophan 200 is a binding site for S-adenosyl-L-methionine. Catalysis depends on histidine 299, which acts as the Proton acceptor.

The protein belongs to the class I-like SAM-binding methyltransferase superfamily. Cation-independent O-methyltransferase family.

Its pathway is secondary metabolite biosynthesis. O-methyltransferase; part of the gene cluster that mediates the biosynthesis of aurasperone B, a dimeric gamma-naphthopyrone. The first step in the biosynthesis of aurasperone B is the production of gamma-naphthopyrone precursor YWA1 by the non-reducing polyketide synthase albA, via condensation of one acetyl-CoA starter unit with 6 malonyl-CoA units. YWA1 is then methylated by aunE at position C-6 to yield foncesin which is further methylated at position C-8 by aunD to produce fonsecin B. A key enzyme in the biosynthetic pathway is the cytochrome P450 monooxygenase aunB which catalyzes the oxidative dimerization of fonsecin B to aurasperone B. AunB also catalyzes the oxidative dimerization of rubrofusarin B into aurasperone A. The polypeptide is O-methyltransferase aunE (Aspergillus niger (strain ATCC MYA-4892 / CBS 513.88 / FGSC A1513)).